A 1157-amino-acid chain; its full sequence is MTLQIIAGRSGTGKTTHLMDEVGEKIKQNSKTYIFIVPDQMTFQMETSFLNKENLAGMLGTQIFSFSRLAWKILQETGGLSKTFLSQTGIEMVIRKAALDQKDKLKIFSRATSRKGFYSELANLFKEMKQEEVSIEDMVQSATNLSTSVNNKVHDISLIYQKYEELLADKFLENEDYLRLLAEKIADSDYLNRTEIVIDGFTSFSKQELTVIGELMRKCDKVTVSLTLNVPEIQHGLDEYSMFKASTEAYYALLELAKLNGTQVEENKFFLENKRAKTESLAFLANTWGHNKFMSFKNEPQNLKIHQANNRRAEIEGIAREIRQLVLNGYRYRDIAILTRNLGDYDVLCETVMEAYNIPTFIDKKRAMAKHPFIEFIRSSLDAILFNWKYEPIFQAVKTEFFFDITEKSSLNRRKADILENYVLENGIQNKWKWEKEGDWVYRKIRGLSTNVLPQTDEEIHMQSIINEMRSLIVNPLATLELNLRKAKTGMEFALALYHYLEQVNAVERLESWRQRAEEQGYLELAREHEQAWSSISALLDEFVEVLGEETLDLDSFTEIIGTGLDALEFSLLPPSLDQVVLSDMENAKLLDMKVIFAIGMNDGVMPLRQKDKGIFSDQDRDALRAEDSKLKPSAKNNIGEEDLLAYKIISLPSDKLFLSYPAADEEGKVLSESNYLRKIKGQFNELNESVYLTDPSLLSDAEQSSYIRSKQATLGLLTSQLQMYKRGYTLSSVWWDAYNSYFENEKESIMAKQVLSSLYYENKTKPLQETTAKNLFGETIHASVSRMEKFFSCEFQHYAQYGLKLEERGHFQLQAVDMGEIFHGAMEWISAELKRNNLDWGNLTEEECKQMAKLAMTFLAPKIQHEILLSSKRMEYIQYKLLQIITRATTVLNEQAKSSAFRPVGLEVDFGLKGDIPPLKIPLQSDSELLLQGRIDRIDMAEQDDRTFLRIIDYKSSSHDLALTEVYYGLALQMLTYLDIVVTNAQKMIGKTAEPAGVLYFHMHNQYVQAEKELSDEAIAKELQKSSKMKGLILSDPVAVSLMDTTLEKGKASTIIPAEIKQNGELSARSRTATRAEFDKMRQFVRHKYQEAGNKILDGAVSINPYKLKERTPCQFCSFRSFCGFDPSLTSNQYRHLANEKAETILTKMDMEGGTQ.

Residues 1-278 (MTLQIIAGRS…FFLENKRAKT (278 aa)) enclose the UvrD-like helicase ATP-binding domain. An ATP-binding site is contributed by 8–15 (GRSGTGKT). Residues 272 to 590 (ENKRAKTESL…VLSDMENAKL (319 aa)) enclose the UvrD-like helicase C-terminal domain. [4Fe-4S] cluster-binding residues include Cys-794, Cys-1115, Cys-1118, and Cys-1124.

The protein belongs to the helicase family. AddB/RexB type 1 subfamily. Heterodimer of AddA and AddB. Mg(2+) is required as a cofactor. The cofactor is [4Fe-4S] cluster.

The heterodimer acts as both an ATP-dependent DNA helicase and an ATP-dependent, dual-direction single-stranded exonuclease. Recognizes the chi site generating a DNA molecule suitable for the initiation of homologous recombination. The AddB subunit has 5' -&gt; 3' nuclease activity but not helicase activity. The chain is ATP-dependent helicase/deoxyribonuclease subunit B from Listeria monocytogenes serotype 4a (strain HCC23).